The primary structure comprises 508 residues: Lysine--tRNA ligase (508 aa).

2 residues coordinate Mg(2+): Glu418 and Glu425.

Belongs to the class-II aminoacyl-tRNA synthetase family. As to quaternary structure, homodimer. The cofactor is Mg(2+).

The protein resides in the cytoplasm. It catalyses the reaction tRNA(Lys) + L-lysine + ATP = L-lysyl-tRNA(Lys) + AMP + diphosphate. This is Lysine--tRNA ligase from Burkholderia thailandensis (strain ATCC 700388 / DSM 13276 / CCUG 48851 / CIP 106301 / E264).